The following is a 95-amino-acid chain: Putative septation protein SpoVG (95 aa).

Belongs to the SpoVG family.

Functionally, could be involved in septation. In Brevibacillus brevis (strain 47 / JCM 6285 / NBRC 100599), this protein is Putative septation protein SpoVG.